Reading from the N-terminus, the 412-residue chain is Tyrosine--tRNA ligase (412 aa).

Positions 50-59 (PTGTDIHLGH) match the 'HIGH' region motif. Positions 244 to 248 (KMSKS) match the 'KMSKS' region motif. Position 247 (Lys247) interacts with ATP. The S4 RNA-binding domain maps to 348–411 (VKFFYLLSSL…IGKKIIKRFE (64 aa)).

It belongs to the class-I aminoacyl-tRNA synthetase family. TyrS type 2 subfamily. In terms of assembly, homodimer.

It is found in the cytoplasm. It carries out the reaction tRNA(Tyr) + L-tyrosine + ATP = L-tyrosyl-tRNA(Tyr) + AMP + diphosphate + H(+). Its function is as follows. Catalyzes the attachment of tyrosine to tRNA(Tyr) in a two-step reaction: tyrosine is first activated by ATP to form Tyr-AMP and then transferred to the acceptor end of tRNA(Tyr). The chain is Tyrosine--tRNA ligase from Prochlorococcus marinus (strain MIT 9312).